Reading from the N-terminus, the 523-residue chain is UDP-glucuronosyltransferase 3A1 (523 aa).

The first 22 residues, 1-22 (MAAHRSWLLVSFFLLEVLLLEA), serve as a signal peptide directing secretion. Residues 23-487 (AKILTISTLS…QPWHEQYMLD (465 aa)) lie on the Extracellular side of the membrane. An N-linked (GlcNAc...) asparagine glycan is attached at N70. A helical membrane pass occupies residues 488 to 508 (VFLFLLGLTLGTLWLSVKVLV). Residues 509–523 (AVTRYLSISRKVKQA) lie on the Cytoplasmic side of the membrane.

The protein belongs to the UDP-glycosyltransferase family. In terms of tissue distribution, highly expressed in kidney, while it is expressed at low levels in liver. Not detected in other tissues examined.

The protein resides in the membrane. The enzyme catalyses glucuronate acceptor + UDP-alpha-D-glucuronate = acceptor beta-D-glucuronoside + UDP + H(+). Its function is as follows. UDP-glucuronosyltransferases catalyze phase II biotransformation reactions in which lipophilic substrates are conjugated with glucuronic acid to increase water solubility and enhance excretion. They are of major importance in the conjugation and subsequent elimination of potentially toxic xenobiotics and endogenous compounds. The sequence is that of UDP-glucuronosyltransferase 3A1 (Ugt3a1) from Mus musculus (Mouse).